The sequence spans 342 residues: Methionyl-tRNA formyltransferase (342 aa).

Ser108–Pro111 is a (6S)-5,6,7,8-tetrahydrofolate binding site.

This sequence belongs to the Fmt family.

The enzyme catalyses L-methionyl-tRNA(fMet) + (6R)-10-formyltetrahydrofolate = N-formyl-L-methionyl-tRNA(fMet) + (6S)-5,6,7,8-tetrahydrofolate + H(+). Functionally, attaches a formyl group to the free amino group of methionyl-tRNA(fMet). The formyl group appears to play a dual role in the initiator identity of N-formylmethionyl-tRNA by promoting its recognition by IF2 and preventing the misappropriation of this tRNA by the elongation apparatus. The protein is Methionyl-tRNA formyltransferase of Prochlorococcus marinus (strain MIT 9313).